Reading from the N-terminus, the 239-residue chain is Leucine rich adaptor protein 1 (239 aa).

LRR repeat units follow at residues 55-83 and 93-114; these read LGDK…LVTL and LLEE…QYSL. Low complexity predominate over residues 107-116; that stretch reads LTSSQYSLTG. 2 disordered regions span residues 107–139 and 200–219; these read LTSS…TDRL and KPPG…DESA. 4 positions are modified to phosphoserine: serine 118, serine 126, serine 129, and serine 213.

As to quaternary structure, forms a tripartite complex with CDC42BPA/CDC42BPB and MYO18A acting as an adapter connecting both. Its binding to CDC42BPA/CDC42BPB results in their activation by abolition of their negative autoregulation. Interacts with CDC42BPA and CDC42BPB.

Its subcellular location is the cytoplasm. Functionally, acts as an activator of the canonical NF-kappa-B pathway and drive the production of pro-inflammatory cytokines. Promotes the antigen (Ag)-presenting and priming function of dendritic cells via the canonical NF-kappa-B pathway. In concert with MYO18A and CDC42BPA/CDC42BPB, is involved in modulating lamellar actomyosin retrograde flow that is crucial to cell protrusion and migration. Activates CDC42BPA/CDC42BPB and targets it to actomyosin through its interaction with MYO18A, leading to MYL9/MLC2 phosphorylation and MYH9/MYH10-dependent actomyosin assembly in the lamella. The chain is Leucine rich adaptor protein 1 (LURAP1) from Homo sapiens (Human).